A 129-amino-acid chain; its full sequence is Flagellar assembly factor FliW (129 aa).

Belongs to the FliW family. As to quaternary structure, interacts with translational regulator CsrA and flagellin(s).

Its subcellular location is the cytoplasm. Acts as an anti-CsrA protein, binds CsrA and prevents it from repressing translation of its target genes, one of which is flagellin. Binds to flagellin and participates in the assembly of the flagellum. The chain is Flagellar assembly factor FliW from Campylobacter jejuni subsp. doylei (strain ATCC BAA-1458 / RM4099 / 269.97).